Here is a 167-residue protein sequence, read N- to C-terminus: Peptide deformylase (167 aa).

Fe cation is bound by residues C91 and H133. E134 is an active-site residue. Position 137 (H137) interacts with Fe cation.

Belongs to the polypeptide deformylase family. Fe(2+) is required as a cofactor.

It carries out the reaction N-terminal N-formyl-L-methionyl-[peptide] + H2O = N-terminal L-methionyl-[peptide] + formate. Removes the formyl group from the N-terminal Met of newly synthesized proteins. Requires at least a dipeptide for an efficient rate of reaction. N-terminal L-methionine is a prerequisite for activity but the enzyme has broad specificity at other positions. The protein is Peptide deformylase of Pseudoalteromonas translucida (strain TAC 125).